Here is a 543-residue protein sequence, read N- to C-terminus: Chaperonin GroEL 1 (543 aa).

ATP-binding positions include 30 to 33 (TLGP), lysine 51, 87 to 91 (DGTTT), glycine 415, and aspartate 496.

This sequence belongs to the chaperonin (HSP60) family. As to quaternary structure, forms a cylinder of 14 subunits composed of two heptameric rings stacked back-to-back. Interacts with the co-chaperonin GroES.

Its subcellular location is the cytoplasm. It catalyses the reaction ATP + H2O + a folded polypeptide = ADP + phosphate + an unfolded polypeptide.. In terms of biological role, together with its co-chaperonin GroES, plays an essential role in assisting protein folding. The GroEL-GroES system forms a nano-cage that allows encapsulation of the non-native substrate proteins and provides a physical environment optimized to promote and accelerate protein folding. The polypeptide is Chaperonin GroEL 1 (Mesorhizobium japonicum (strain LMG 29417 / CECT 9101 / MAFF 303099) (Mesorhizobium loti (strain MAFF 303099))).